Here is an 864-residue protein sequence, read N- to C-terminus: Leucine--tRNA ligase (864 aa).

The 'HIGH' region motif lies at 42–52 (PYPSGRLHMGH). The short motif at 621–625 (KMSKS) is the 'KMSKS' region element. Residue K624 participates in ATP binding.

The protein belongs to the class-I aminoacyl-tRNA synthetase family.

It is found in the cytoplasm. The catalysed reaction is tRNA(Leu) + L-leucine + ATP = L-leucyl-tRNA(Leu) + AMP + diphosphate. The sequence is that of Leucine--tRNA ligase from Alkalilimnicola ehrlichii (strain ATCC BAA-1101 / DSM 17681 / MLHE-1).